The chain runs to 295 residues: Ankyrin repeat and SOCS box protein 17 (295 aa).

One copy of the ANK repeat lies at 146 to 176 (SGITPLLYVAQTRQSNILKILLQYGILEREK). Residues 243 to 295 (DYIPPTRYKDPCELVHLCRITIRTQLLANNMLPNGIFSLLIPTRLQNFLNLES) enclose the SOCS box domain.

The protein belongs to the ankyrin SOCS box (ASB) family. In terms of tissue distribution, specifically expressed in testis. Localizes to spermatogenic cells in testis, with highest expression in round spermatids and condensing spermatids and lower expression in pachytene spermatocytes.

It participates in protein modification; protein ubiquitination. May be a substrate-recognition component of a SCF-like ECS (Elongin-Cullin-SOCS-box protein) E3 ubiquitin-protein ligase complex which mediates the ubiquitination and subsequent proteasomal degradation of target proteins. This Mus musculus (Mouse) protein is Ankyrin repeat and SOCS box protein 17 (Asb17).